A 214-amino-acid polypeptide reads, in one-letter code: Large ribosomal subunit protein bL25 (214 aa).

The interval 189–214 (IHASRKAKADEDEAAEGEEGEEGAED) is disordered. Acidic residues predominate over residues 198-214 (DEDEAAEGEEGEEGAED).

This sequence belongs to the bacterial ribosomal protein bL25 family. CTC subfamily. Part of the 50S ribosomal subunit; part of the 5S rRNA/L5/L18/L25 subcomplex. Contacts the 5S rRNA. Binds to the 5S rRNA independently of L5 and L18.

Its function is as follows. This is one of the proteins that binds to the 5S RNA in the ribosome where it forms part of the central protuberance. This Alkalilimnicola ehrlichii (strain ATCC BAA-1101 / DSM 17681 / MLHE-1) protein is Large ribosomal subunit protein bL25.